The following is a 603-amino-acid chain: Spastin (603 aa).

Residues 1-34 (MNSPGGRNNKKKPVTPAAETGPGPPTPPPPPAET) are disordered. Residues 1 to 54 (MNSPGGRNNKKKPVTPAAETGPGPPTPPPPPAETQVLLAPPSLHKRNLYLFSYP) are Cytoplasmic-facing. Residues 22-32 (PGPPTPPPPPA) are compositionally biased toward pro residues. The segment at residues 55 to 75 (LLAAFSLLRFLAFQLGLLFVW) is an intramembrane region (helical). At 76 to 603 (FCERLSRRVM…WNKEFGDTTV (528 aa)) the chain is on the cytoplasmic side. The region spanning 113–188 (YHQQAFQYIS…LMAKDRLQLL (76 aa)) is the MIT domain. Residues 216–294 (GLLKPEKGAV…RTNKPTTPTT (79 aa)) are disordered. The span at 219 to 231 (KPEKGAVPKKKDP) shows a compositional bias: basic and acidic residues. The segment covering 281 to 294 (KNNTRTNKPTTPTT) has biased composition (low complexity). Position 369–376 (369–376 (GPPGNGKT)) interacts with ATP.

It belongs to the AAA ATPase family. Spastin subfamily. In terms of assembly, homohexamer. The homohexamer is stabilized by ATP-binding. The homohexamer may adopt a ring conformation through which microtubules pass prior to being severed. Interacts with microtubules.

The protein resides in the membrane. It is found in the cytoplasm. The protein localises to the cytoskeleton. Its subcellular location is the microtubule organizing center. It localises to the centrosome. The protein resides in the perinuclear region. It is found in the nucleus. It carries out the reaction n ATP + n H2O + a microtubule = n ADP + n phosphate + (n+1) alpha/beta tubulin heterodimers.. ATP-dependent microtubule severing protein that specifically recognizes and cuts microtubules that are polyglutamylated. Preferentially recognizes and acts on microtubules decorated with short polyglutamate tails: severing activity increases as the number of glutamates per tubulin rises from one to eight, but decreases beyond this glutamylation threshold. Microtubule severing promotes reorganization of cellular microtubule arrays and the release of microtubules from the centrosome following nucleation. Required for membrane traffic from the endoplasmic reticulum (ER) to the Golgi and for completion of the abscission stage of cytokinesis. Also plays a role in axon growth and the formation of axonal branches. The chain is Spastin from Xenopus tropicalis (Western clawed frog).